The following is a 317-amino-acid chain: tRNA pseudouridine synthase B (317 aa).

The Nucleophile role is filled by Asp47.

The protein belongs to the pseudouridine synthase TruB family. Type 1 subfamily.

It catalyses the reaction uridine(55) in tRNA = pseudouridine(55) in tRNA. Responsible for synthesis of pseudouridine from uracil-55 in the psi GC loop of transfer RNAs. The chain is tRNA pseudouridine synthase B from Shewanella sp. (strain ANA-3).